Here is a 417-residue protein sequence, read N- to C-terminus: Testis-specific Y-encoded-like protein 5 (417 aa).

The segment covering 1-25 (MSGRSRGRKSSRAKNRGKGRAKARV) has biased composition (basic residues). Disordered stretches follow at residues 1-55 (MSGR…QVQA), 93-112 (AAGDHGQAAARPGPGKAASL), 127-202 (GTVG…EGSM), and 391-417 (KGKEKEGRQGPGKQPMETTQPGVSQSN). A compositionally biased stretch (basic and acidic residues) spans 27–37 (PAPDDAPRDPD). Residues 93–103 (AAGDHGQAAAR) show a composition bias toward low complexity. Residues 182 to 191 (GEEKKEERDA) show a composition bias toward basic and acidic residues. Residues 406–417 (METTQPGVSQSN) are compositionally biased toward polar residues.

This sequence belongs to the nucleosome assembly protein (NAP) family. Interacts with USP7.

In terms of biological role, involved in modulation of cell growth and cellular response to gamma radiation probably via regulation of the Akt signaling pathway. Involved in regulation of p53/TP53. Suppresses p53/TP53 protein levels and promotes its ubiquitination; the function is dependent on USP7 and independent on MDM2. Proposed to displace p53/TP53 from interaction with USP7. This is Testis-specific Y-encoded-like protein 5 (TSPYL5) from Homo sapiens (Human).